Consider the following 495-residue polypeptide: N-succinylglutamate 5-semialdehyde dehydrogenase (495 aa).

228 to 233 (GSYATG) lines the NAD(+) pocket. Residues Glu251 and Cys285 contribute to the active site.

Belongs to the aldehyde dehydrogenase family. AstD subfamily.

It catalyses the reaction N-succinyl-L-glutamate 5-semialdehyde + NAD(+) + H2O = N-succinyl-L-glutamate + NADH + 2 H(+). It functions in the pathway amino-acid degradation; L-arginine degradation via AST pathway; L-glutamate and succinate from L-arginine: step 4/5. Its function is as follows. Catalyzes the NAD-dependent reduction of succinylglutamate semialdehyde into succinylglutamate. In Legionella pneumophila (strain Corby), this protein is N-succinylglutamate 5-semialdehyde dehydrogenase.